We begin with the raw amino-acid sequence, 292 residues long: Probable serine/threonine-protein kinase FPV226 (292 aa).

A Protein kinase domain is found at 14–292; the sequence is WKIDKLIGCG…DLLRQLVNSL (279 aa). Residues 20–28 and Lys43 contribute to the ATP site; that span reads IGCGGFGCV. Asp147 acts as the Proton acceptor in catalysis.

The protein belongs to the protein kinase superfamily. Ser/Thr protein kinase family. Poxviruses subfamily.

The catalysed reaction is L-seryl-[protein] + ATP = O-phospho-L-seryl-[protein] + ADP + H(+). It catalyses the reaction L-threonyl-[protein] + ATP = O-phospho-L-threonyl-[protein] + ADP + H(+). The polypeptide is Probable serine/threonine-protein kinase FPV226 (Vertebrata (FPV)).